The primary structure comprises 229 residues: Potassium/proton antiporter CemA (229 aa).

4 helical membrane-spanning segments follow: residues 11–31, 118–138, 158–178, and 190–210; these read TTPF…SLFF, IISF…LVIL, LLAL…ELLI, and LLVC…TFNY.

Belongs to the CemA family.

It localises to the plastid. Its subcellular location is the chloroplast inner membrane. The enzyme catalyses K(+)(in) + H(+)(out) = K(+)(out) + H(+)(in). Its function is as follows. Contributes to K(+)/H(+) antiport activity by supporting proton efflux to control proton extrusion and homeostasis in chloroplasts in a light-dependent manner to modulate photosynthesis. Prevents excessive induction of non-photochemical quenching (NPQ) under continuous-light conditions. Indirectly promotes efficient inorganic carbon uptake into chloroplasts. In Pelargonium hortorum (Common geranium), this protein is Potassium/proton antiporter CemA.